A 79-amino-acid polypeptide reads, in one-letter code: Major outer membrane lipoprotein Lpp 2 (79 aa).

The signal sequence occupies residues 1-21 (MNRTNKLILGAVVLGSALLAG). Residue Cys22 is the site of N-palmitoyl cysteine attachment. The S-diacylglycerol cysteine moiety is linked to residue Cys22. 2 consecutive repeats follow at residues 25-35 (NAKIDQLSSDV) and 39-49 (SAKVDQLSNDV). Residues 28–76 (IDQLSSDVQTLSAKVDQLSNDVNAMRSDIQAAKDDAARANQRLDNKVSR) are a coiled coil. The disordered stretch occupies residues 60-79 (KDDAARANQRLDNKVSRVRK). N6-murein peptidoglycan lysine is present on Lys79.

This sequence belongs to the Lpp family. Homotrimer.

It localises to the cell outer membrane. It is found in the secreted. Its subcellular location is the cell wall. A highly abundant outer membrane lipoprotein that controls the distance between the inner and outer membranes. The only protein known to be covalently linked to the peptidoglycan network (PGN). Also non-covalently binds the PGN. The link between the cell outer membrane and PGN contributes to maintenance of the structural and functional integrity of the cell envelope, and maintains the correct distance between the PGN and the outer membrane. The sequence is that of Major outer membrane lipoprotein Lpp 2 from Salmonella paratyphi A (strain ATCC 9150 / SARB42).